The following is an 80-amino-acid chain: Large ribosomal subunit protein bL31B (80 aa).

This sequence belongs to the bacterial ribosomal protein bL31 family. Type B subfamily. Part of the 50S ribosomal subunit.

This Streptococcus pneumoniae serotype 2 (strain D39 / NCTC 7466) protein is Large ribosomal subunit protein bL31B.